A 181-amino-acid chain; its full sequence is Thioredoxin-like protein CITRX2, chloroplastic (181 aa).

The N-terminal 70 residues, 1–70 (MQAATLSFQP…PDVATGKYVR (70 aa)), are a transit peptide targeting the chloroplast. One can recognise a Thioredoxin domain in the interval 72–181 (DYLVKKVSAK…MMRDIINNDL (110 aa)). Catalysis depends on nucleophile residues Cys-104 and Cys-107. Cys-104 and Cys-107 are joined by a disulfide.

The protein belongs to the thioredoxin family. Plant CITRX-type subfamily.

Its subcellular location is the plastid. It localises to the chloroplast. Functionally, probable thiol-disulfide oxidoreductase that may play a role in proper chloroplast development. The sequence is that of Thioredoxin-like protein CITRX2, chloroplastic from Nicotiana benthamiana.